The following is a 388-amino-acid chain: Succinate--CoA ligase [ADP-forming] subunit beta (388 aa).

One can recognise an ATP-grasp domain in the interval 9–245; it reads KALLKEYGMP…KSQENERELK (237 aa). Residues Lys46, 53–55, Glu100, Tyr103, and Glu108 each bind ATP; that span reads GRG. Mg(2+) is bound by residues Asn200 and Asp214. Residues Asn265 and 322-324 each bind substrate; that span reads GIV.

This sequence belongs to the succinate/malate CoA ligase beta subunit family. In terms of assembly, heterotetramer of two alpha and two beta subunits. Requires Mg(2+) as cofactor.

It carries out the reaction succinate + ATP + CoA = succinyl-CoA + ADP + phosphate. The enzyme catalyses GTP + succinate + CoA = succinyl-CoA + GDP + phosphate. It participates in carbohydrate metabolism; tricarboxylic acid cycle; succinate from succinyl-CoA (ligase route): step 1/1. In terms of biological role, succinyl-CoA synthetase functions in the citric acid cycle (TCA), coupling the hydrolysis of succinyl-CoA to the synthesis of either ATP or GTP and thus represents the only step of substrate-level phosphorylation in the TCA. The beta subunit provides nucleotide specificity of the enzyme and binds the substrate succinate, while the binding sites for coenzyme A and phosphate are found in the alpha subunit. This is Succinate--CoA ligase [ADP-forming] subunit beta from Acinetobacter baumannii (strain AB307-0294).